We begin with the raw amino-acid sequence, 439 residues long: ATP-dependent RNA helicase SUB2 (439 aa).

Over residues 1-19 (MSHEGEEDLLEYSDNEQEI) the composition is skewed to acidic residues. The segment at 1 to 48 (MSHEGEEDLLEYSDNEQEIQVDNKETAVEGTTENEATQENGEADKKGS) is disordered. Over residues 29–40 (EGTTENEATQEN) the composition is skewed to polar residues. A Q motif motif is present at residues 55–83 (TGFKDFLLKPELSRAIIDCGFEHPSEVQQ). One can recognise a Helicase ATP-binding domain in the interval 86–261 (IPQSIHGTDV…RRFLQNPLEI (176 aa)). 99-106 (AKSGLGKT) serves as a coordination point for ATP. Residues 208-211 (DECD) carry the DECD box motif. In terms of domain architecture, Helicase C-terminal spans 273–434 (GLQQYYIKLE…EFPEEGIDPS (162 aa)).

The protein belongs to the DEAD box helicase family. DECD subfamily.

It is found in the nucleus. The enzyme catalyses ATP + H2O = ADP + phosphate + H(+). In terms of biological role, ATP-binding RNA helicase involved in transcription elongation and required for the export of mRNA out of the nucleus. SUB2 also plays a role in pre-mRNA splicing and spliceosome assembly. May be involved in rDNA and telomeric silencing, and maintenance of genome integrity. In Candida glabrata (strain ATCC 2001 / BCRC 20586 / JCM 3761 / NBRC 0622 / NRRL Y-65 / CBS 138) (Yeast), this protein is ATP-dependent RNA helicase SUB2 (SUB2).